The sequence spans 427 residues: Amino acid transporter AVT3A (427 aa).

Residues 1–35 are disordered; sequence MRYDQEAGSSSHSLPSGSSSHSLPPTEDTPLLGPR. Topologically, residues 1–42 are cytoplasmic; sequence MRYDQEAGSSSHSLPSGSSSHSLPPTEDTPLLGPRTLSSQPK. Residues 8 to 24 show a composition bias toward low complexity; the sequence is GSSSHSLPSGSSSHSLP. The chain crosses the membrane as a helical span at residues 43–63; sequence TFANVFIAIVGAGVLGLPYTF. The Vacuolar segment spans residues 64–69; the sequence is KKTGWL. Residues 70-90 form a helical membrane-spanning segment; the sequence is LGLLTLLFVSSLTFFCMMLLV. The Cytoplasmic segment spans residues 91–122; sequence HTRRKLESLSGFNSITSFGDLGESVCGPAGRL. A helical transmembrane segment spans residues 123–143; that stretch reads VVDVMLVLSQSGFCVSYLIFV. Over 144 to 157 the chain is Vacuolar; it reads ATTMANLLSRGTEH. The helical transmembrane segment at 158–178 threads the bilayer; the sequence is ILGLDAASIYLWGCFPFQLGL. The Cytoplasmic segment spans residues 179–186; it reads NSIPSLTH. Residues 187–207 traverse the membrane as a helical segment; sequence LAPLSIFADIVDVAATLVVMV. The Vacuolar segment spans residues 208 to 227; that stretch reads QDVFIFLKRRPPLRVFGGVS. Residues 228 to 248 traverse the membrane as a helical segment; the sequence is VFFYGLGVAVYAFEGIGMVLP. The Cytoplasmic portion of the chain corresponds to 249-262; that stretch reads LELEAKYKDKFGRA. A helical membrane pass occupies residues 263-283; the sequence is LGLAMGLISIMYGAFGLLGYM. Over 284-300 the chain is Vacuolar; sequence AYGEETKDIITTNLGTG. The chain crosses the membrane as a helical span at residues 301 to 321; sequence VVSTLVQLGLAINLFFTFPLM. The Cytoplasmic segment spans residues 322-339; the sequence is MQPVYEVVERRLCSSRYS. A helical transmembrane segment spans residues 340–360; it reads VWVRWATVLVVTLVALLVPNF. Over 361–362 the chain is Vacuolar; sequence AD. Residues 363–383 traverse the membrane as a helical segment; sequence FLSLVGSSVCVVLGFVLPSLF. Over 384 to 396 the chain is Cytoplasmic; the sequence is HLQAFKNELSITR. Residues 397–417 form a helical membrane-spanning segment; sequence IVVDVLVFLIGVMIAITGTWT. At 418 to 427 the chain is on the vacuolar side; that stretch reads AVHEILTSKA.

Belongs to the amino acid/polyamine transporter 2 family. Amino acid/auxin permease (AAAP) (TC 2.A.18.8) subfamily. Ubiquitous.

It localises to the vacuole membrane. Its function is as follows. Translocates preferentially neutral amino acids and to a lesser extent aromatic amino acids from the vacuole to the cytoplasm. Requires ATP for function. This chain is Amino acid transporter AVT3A, found in Arabidopsis thaliana (Mouse-ear cress).